The primary structure comprises 32 residues: Cytochrome b6-f complex subunit 7 (32 aa).

Residues 9-27 (AALFWVLIPLGLAGGALLL) form a helical membrane-spanning segment.

Belongs to the PetM family. The 4 large subunits of the cytochrome b6-f complex are cytochrome b6, subunit IV (17 kDa polypeptide, PetD), cytochrome f and the Rieske protein, while the 4 small subunits are PetG, PetL, PetM and PetN. The complex functions as a dimer.

The protein localises to the cellular thylakoid membrane. In terms of biological role, component of the cytochrome b6-f complex, which mediates electron transfer between photosystem II (PSII) and photosystem I (PSI), cyclic electron flow around PSI, and state transitions. This chain is Cytochrome b6-f complex subunit 7, found in Synechococcus sp. (strain RCC307).